The sequence spans 90 residues: Transcriptional repressor SdpR (90 aa).

The HTH arsR-type domain occupies 1–87 (MNNVFKAISD…WMLNFINKGD (87 aa)). The segment at residues 39 to 62 (PSISHHLNILKQAEVISDHRKGQF) is a DNA-binding region (H-T-H motif).

It localises to the cytoplasm. In terms of biological role, represses the transcription of the sdpIR operon and of several other operons that probably contribute to delaying commitment to sporulation. The polypeptide is Transcriptional repressor SdpR (sdpR) (Bacillus subtilis (strain 168)).